A 203-amino-acid polypeptide reads, in one-letter code: LexA repressor 2 (203 aa).

Residues M28–E48 constitute a DNA-binding region (H-T-H motif). Residues S122 and K159 each act as for autocatalytic cleavage activity in the active site.

This sequence belongs to the peptidase S24 family. As to quaternary structure, homodimer.

It catalyses the reaction Hydrolysis of Ala-|-Gly bond in repressor LexA.. In terms of biological role, represses a number of genes involved in the response to DNA damage (SOS response), including recA and lexA. In the presence of single-stranded DNA, RecA interacts with LexA causing an autocatalytic cleavage which disrupts the DNA-binding part of LexA, leading to derepression of the SOS regulon and eventually DNA repair. In Geobacter sulfurreducens (strain ATCC 51573 / DSM 12127 / PCA), this protein is LexA repressor 2.